We begin with the raw amino-acid sequence, 342 residues long: Terpene cyclase resF (342 aa).

Transmembrane regions (helical) follow at residues 5 to 25 (VSVV…GVFA), 81 to 101 (FMAQ…TEDF), 115 to 135 (WGVF…GVCF), 151 to 171 (STWI…MLIF), and 182 to 202 (IWGV…ASLL). An N-linked (GlcNAc...) asparagine glycan is attached at Asn-224. 3 helical membrane-spanning segments follow: residues 229 to 249 (YVVA…FHLG), 269 to 289 (FLQI…WHEL), and 305 to 325 (YLLL…AWAL).

The protein belongs to the membrane-bound ascI terpene cyclase family.

The protein localises to the membrane. Its pathway is antifungal biosynthesis. In terms of biological role, cyclase; part of the gene cluster that mediates the biosynthesis of the tetrahydropyranyl antifungal agent restricticin that acts as an inhibitor of CYP51 and blocks the ergosterol biosynthesis. The highly reducing polyketide synthase resH, the short chain dehydrogenase resG, the cyclase resF, the FAD-dependent monooxygenase resA and the enoylreductase resD are required to generate the first stable intermediate desmethylrestrictinol. ResH with resD biosynthesize the first polyketide chain intermediate that is reduced by resG, followed by epoxidation by resA before 6-endo cyclization via epoxide opening by resF leads to desmethylrestrictinol. The methyltransferase resE then catalyzes the C4 O-methylation of desmethylrestrictinol to produce restrictinol, and the nonribosomal peptide synthetase resC catalyzes the C3 esterification of restrictinol with glycine that leads to restricticin. The sequence is that of Terpene cyclase resF from Aspergillus sclerotiorum.